The primary structure comprises 311 residues: Serine hydrolase-like protein (311 aa).

In terms of domain architecture, AB hydrolase-1 spans 27–227 (PPVLCLHGWL…FVSKEMFVHS (201 aa)). Serine 102 is an active-site residue. At serine 210 the chain carries Phosphoserine.

It belongs to the AB hydrolase superfamily. Ubiquitous. High protein expression in skeletal and cardiac muscle.

The protein localises to the cytoplasm. Its subcellular location is the perinuclear region. The protein resides in the peroxisome. Functionally, probable serine hydrolase. May be related to cell muscle hypertrophy. The protein is Serine hydrolase-like protein (Serhl) of Mus musculus (Mouse).